Reading from the N-terminus, the 422-residue chain is Tk-subtilisin (422 aa).

An N-terminal signal peptide occupies residues 1-24 (MKKSIALVLSIVLLAALFAVPASA). Residues 25–106 (GEQNTIRVIV…SWLGGGSTQP (82 aa)) constitute a propeptide that is removed on maturation. The 307-residue stretch at 111 to 417 (PWGIERVKAP…YGVVRAALAV (307 aa)) folds into the Peptidase S8 domain. Active-site charge relay system residues include Asp139, His177, and Ser348.

This sequence belongs to the peptidase S8 family. As to quaternary structure, monomer. Ca(2+) serves as cofactor.

The protein localises to the secreted. In terms of biological role, has a broad substrate specificity with a slight preference to large hydrophobic amino acid residues at the P1 position. The chain is Tk-subtilisin from Thermococcus kodakarensis (strain ATCC BAA-918 / JCM 12380 / KOD1) (Pyrococcus kodakaraensis (strain KOD1)).